Here is a 225-residue protein sequence, read N- to C-terminus: Agamous-like MADS-box protein TM6 (225 aa).

The MADS-box domain maps to 1 to 61 (MGRGKIEIKR…GKFHEYTSPT (61 aa)). One can recognise a K-box domain in the interval 84-174 (YERMQENLRK…LLNFEAKCDD (91 aa)).

Expressed during flower development in stamens, petals and carpels. Expressed in fruits and seeds.

The protein resides in the nucleus. Functionally, probable transcription factor involved in flower development. The polypeptide is Agamous-like MADS-box protein TM6 (Vitis vinifera (Grape)).